We begin with the raw amino-acid sequence, 314 residues long: Olfactory receptor 11H7 (314 aa).

Topologically, residues 1–24 (MNNSQISTVTQFVLLGFPGPWKIQ) are extracellular. Residue asparagine 2 is glycosylated (N-linked (GlcNAc...) asparagine). Residues 25-45 (IIFFSMILLVYIFTLTGNMAI) traverse the membrane as a helical segment. At 46 to 57 (ICAVRWDHRLHT) the chain is on the cytoplasmic side. Residues 58–78 (PMYVLLANFSFLEIWYVTCTV) form a helical membrane-spanning segment. The Extracellular portion of the chain corresponds to 79 to 97 (PNMLVNFFSKTKTISFSGC). Residues cysteine 97 and cysteine 179 are joined by a disulfide bond. The helical transmembrane segment at 98–118 (FTQFHFFFSLGTTECFFLCVM) threads the bilayer. Residues 119 to 142 (AYDRYLAICHPLHYPSIMTGQLCG) lie on the Cytoplasmic side of the membrane. Residues 143–163 (ILVSLCWLIGFLGHSISIFFI) form a helical membrane-spanning segment. The Extracellular portion of the chain corresponds to 164–201 (FQLPFCGPNIIDHFLCDVDPLMALSSAPTHIIGHVFHS). The helical transmembrane segment at 202-222 (VSSLFINLTMVYILGSYTLVL) threads the bilayer. Topologically, residues 223-244 (RTVLQVPSSAGWQKAISTCGSH) are cytoplasmic. A helical membrane pass occupies residues 245–265 (LVVVSLFYGAIMLMYVSPTPG). Residues 266–271 (NSVAMH) lie on the Extracellular side of the membrane. Residues 272-292 (KLITLIYSVVTPVLNPLIYSL) form a helical membrane-spanning segment. Topologically, residues 293–314 (RNKDMKYALHHVFCGMRIIQRS) are cytoplasmic.

This sequence belongs to the G-protein coupled receptor 1 family.

The protein resides in the cell membrane. Odorant receptor. Activated by isovaleric acid. This chain is Olfactory receptor 11H7 (OR11H7), found in Homo sapiens (Human).